A 156-amino-acid chain; its full sequence is SsrA-binding protein (156 aa).

Belongs to the SmpB family.

Its subcellular location is the cytoplasm. Required for rescue of stalled ribosomes mediated by trans-translation. Binds to transfer-messenger RNA (tmRNA), required for stable association of tmRNA with ribosomes. tmRNA and SmpB together mimic tRNA shape, replacing the anticodon stem-loop with SmpB. tmRNA is encoded by the ssrA gene; the 2 termini fold to resemble tRNA(Ala) and it encodes a 'tag peptide', a short internal open reading frame. During trans-translation Ala-aminoacylated tmRNA acts like a tRNA, entering the A-site of stalled ribosomes, displacing the stalled mRNA. The ribosome then switches to translate the ORF on the tmRNA; the nascent peptide is terminated with the 'tag peptide' encoded by the tmRNA and targeted for degradation. The ribosome is freed to recommence translation, which seems to be the essential function of trans-translation. In Staphylococcus carnosus (strain TM300), this protein is SsrA-binding protein.